Consider the following 702-residue polypeptide: Methionine--tRNA ligase (702 aa).

The 'HIGH' region signature appears at 23-33 (PYANGPLHLGH). Zn(2+) is bound by residues Cys154, Cys157, Cys167, and Cys170. Positions 341–345 (KMSKS) match the 'KMSKS' region motif. Residue Lys344 participates in ATP binding. Residues 562–593 (LAPPPASAKQQNASMSNTAPPPTAEKPETTAP) form a disordered region. Residues 569–578 (AKQQNASMSN) show a composition bias toward polar residues. Residues 599 to 702 (DFAKLDLRIG…SSAQPGMPVR (104 aa)) enclose the tRNA-binding domain.

It belongs to the class-I aminoacyl-tRNA synthetase family. MetG type 1 subfamily. In terms of assembly, homodimer. Requires Zn(2+) as cofactor.

It localises to the cytoplasm. The catalysed reaction is tRNA(Met) + L-methionine + ATP = L-methionyl-tRNA(Met) + AMP + diphosphate. Functionally, is required not only for elongation of protein synthesis but also for the initiation of all mRNA translation through initiator tRNA(fMet) aminoacylation. In Xylella fastidiosa (strain 9a5c), this protein is Methionine--tRNA ligase.